A 466-amino-acid chain; its full sequence is tRNA-2-methylthio-N(6)-dimethylallyladenosine synthase (466 aa).

The region spanning 2 to 118 is the MTTase N-terminal domain; that stretch reads KRFYIHTIGC…LPGHIQAVAH (117 aa). [4Fe-4S] cluster contacts are provided by Cys-11, Cys-47, Cys-81, Cys-157, Cys-161, and Cys-164. The 230-residue stretch at 143-372 folds into the Radical SAM core domain; the sequence is DSSGVTGFIT…LELQNRITAE (230 aa). Residues 375-453 form the TRAM domain; sequence RALEGRVEQV…AHSLSGIAVG (79 aa).

It belongs to the methylthiotransferase family. MiaB subfamily. As to quaternary structure, monomer. It depends on [4Fe-4S] cluster as a cofactor.

The protein localises to the cytoplasm. The enzyme catalyses N(6)-dimethylallyladenosine(37) in tRNA + (sulfur carrier)-SH + AH2 + 2 S-adenosyl-L-methionine = 2-methylsulfanyl-N(6)-dimethylallyladenosine(37) in tRNA + (sulfur carrier)-H + 5'-deoxyadenosine + L-methionine + A + S-adenosyl-L-homocysteine + 2 H(+). Its function is as follows. Catalyzes the methylthiolation of N6-(dimethylallyl)adenosine (i(6)A), leading to the formation of 2-methylthio-N6-(dimethylallyl)adenosine (ms(2)i(6)A) at position 37 in tRNAs that read codons beginning with uridine. This chain is tRNA-2-methylthio-N(6)-dimethylallyladenosine synthase, found in Desulfosudis oleivorans (strain DSM 6200 / JCM 39069 / Hxd3) (Desulfococcus oleovorans).